The chain runs to 161 residues: Globin CTT-VIIB-3 (161 aa).

A signal peptide spans 1–16; the sequence is MKFFAVLALCIVGAIA. Positions 18–161 constitute a Globin domain; that stretch reads PLTADEASLV…NTYAIVVPRL (144 aa). Residues H76 and H111 each coordinate heme b.

Belongs to the globin family. As to quaternary structure, homodimer.

This is Globin CTT-VIIB-3 (CTT-7B3) from Chironomus thummi thummi (Midge).